A 437-amino-acid polypeptide reads, in one-letter code: Adenylyltransferase and sulfurtransferase MOCS3 (437 aa).

Residues Gly82, Asp103, 110-114, Lys127, and 171-172 each bind ATP; these read TNLHR and DN. Zn(2+) contacts are provided by Cys212 and Cys215. The active-site Glycyl thioester intermediate; for adenylyltransferase activity is Cys229. 2 residues coordinate Zn(2+): Cys287 and Cys290. Positions 337-435 constitute a Rhodanese domain; that stretch reads SNVPHLLVDV…WTHNIDPEFP (99 aa). Cys391 serves as the catalytic Cysteine persulfide intermediate; for sulfurtransferase activity.

It in the N-terminal section; belongs to the HesA/MoeB/ThiF family. UBA4 subfamily. Requires Zn(2+) as cofactor.

Its subcellular location is the cytoplasm. The protein resides in the cytosol. The enzyme catalyses [molybdopterin-synthase sulfur-carrier protein]-C-terminal Gly-Gly + ATP + H(+) = [molybdopterin-synthase sulfur-carrier protein]-C-terminal Gly-Gly-AMP + diphosphate. It catalyses the reaction [molybdopterin-synthase sulfur-carrier protein]-C-terminal Gly-Gly-AMP + S-sulfanyl-L-cysteinyl-[cysteine desulfurase] + AH2 = [molybdopterin-synthase sulfur-carrier protein]-C-terminal-Gly-aminoethanethioate + L-cysteinyl-[cysteine desulfurase] + A + AMP + 2 H(+). The protein operates within tRNA modification; 5-methoxycarbonylmethyl-2-thiouridine-tRNA biosynthesis. Its pathway is cofactor biosynthesis; molybdopterin biosynthesis. In terms of biological role, plays a central role in 2-thiolation of mcm(5)S(2)U at tRNA wobble positions of cytosolic tRNA(Lys), tRNA(Glu) and tRNA(Gln). Also essential during biosynthesis of the molybdenum cofactor. Acts by mediating the C-terminal thiocarboxylation of sulfur carriers URM1 and MOCS2A. Its N-terminus first activates URM1 and MOCS2A as acyl-adenylates (-COAMP), then the persulfide sulfur on the catalytic cysteine is transferred to URM1 and MOCS2A to form thiocarboxylation (-COSH) of their C-terminus. The reaction probably involves hydrogen sulfide that is generated from the persulfide intermediate and that acts as a nucleophile towards URM1 and MOCS2A. Subsequently, a transient disulfide bond is formed. Does not use thiosulfate as sulfur donor; NFS1 probably acting as a sulfur donor for thiocarboxylation reactions. This chain is Adenylyltransferase and sulfurtransferase MOCS3, found in Aedes aegypti (Yellowfever mosquito).